The primary structure comprises 393 residues: S-adenosylmethionine synthase 1 (393 aa).

Glutamate 9 serves as a coordination point for Mg(2+). An ATP-binding site is contributed by histidine 15. Glutamate 43 is a binding site for K(+). The L-methionine site is built by glutamate 56 and glutamine 99. Residues aspartate 167 to lysine 169, serine 235 to phenylalanine 238, aspartate 246, arginine 252 to lysine 253, alanine 269, lysine 273, and lysine 277 each bind ATP. Residue aspartate 246 coordinates L-methionine. L-methionine is bound at residue lysine 277.

Belongs to the AdoMet synthase family. As to quaternary structure, homotetramer. The cofactor is Mn(2+). It depends on Mg(2+) as a cofactor. Co(2+) serves as cofactor. Requires K(+) as cofactor.

Its subcellular location is the cytoplasm. The enzyme catalyses L-methionine + ATP + H2O = S-adenosyl-L-methionine + phosphate + diphosphate. It participates in amino-acid biosynthesis; S-adenosyl-L-methionine biosynthesis; S-adenosyl-L-methionine from L-methionine: step 1/1. Catalyzes the formation of S-adenosylmethionine from methionine and ATP. The reaction comprises two steps that are both catalyzed by the same enzyme: formation of S-adenosylmethionine (AdoMet) and triphosphate, and subsequent hydrolysis of the triphosphate. This Picea sitchensis (Sitka spruce) protein is S-adenosylmethionine synthase 1 (METK1).